The chain runs to 139 residues: Probable transcription termination protein NusA (139 aa).

In terms of domain architecture, KH spans 97-139; sequence STVAYAEVDRADTGVAIGRDGETIETARRLAERQFDIDDIELA.

This sequence belongs to the NusA family.

Its subcellular location is the cytoplasm. In terms of biological role, participates in transcription termination. The sequence is that of Probable transcription termination protein NusA from Halococcus morrhuae (Micrococcus morrhuae).